An 838-amino-acid chain; its full sequence is Envelope glycoprotein H (838 aa).

The N-terminal stretch at 1–18 is a signal peptide; it reads MGNGLWFVGVIILGAAWG. At 19–803 the chain is on the virion surface side; the sequence is QVHDWTEQTD…DTQPVAAIAP (785 aa). N-linked (GlcNAc...) asparagine; by host glycans are attached at residues N73 and N120. Positions 174–204 are disordered; sequence FPRGDNVATASHPSGPRDTPPPRPPVGARRH. N216 is a glycosylation site (N-linked (GlcNAc...) asparagine; by host). Residues 259-323 are interaction with gL; sequence DAALVRARYG…PGGPRYRVFV (65 aa). N332, N437, N670, and N784 each carry an N-linked (GlcNAc...) asparagine; by host glycan. A helical membrane pass occupies residues 804-824; sequence GFLAASALGVVMITAALAGIL. The Intravirion portion of the chain corresponds to 825-838; the sequence is KVLRTSVPFFWRRE.

This sequence belongs to the herpesviridae glycoprotein H family. Interacts with glycoprotein L (gL); this interaction is necessary for the correct processing and cell surface expression of gH. The heterodimer gH/gL seems to interact with gB trimers during fusion. Post-translationally, N-glycosylated, O-glycosylated, and sialylated.

The protein resides in the virion membrane. Its subcellular location is the host cell membrane. The protein localises to the host endosome membrane. The heterodimer glycoprotein H-glycoprotein L is required for the fusion of viral and plasma membranes leading to virus entry into the host cell. Following initial binding to host receptor, membrane fusion is mediated by the fusion machinery composed of gB and the heterodimer gH/gL. May also be involved in the fusion between the virion envelope and the outer nuclear membrane during virion morphogenesis. This is Envelope glycoprotein H from Homo sapiens (Human).